The chain runs to 424 residues: Putative chloroquine resistance transporter (424 aa).

Over 1 to 56 (MTVIKKGKNKKKNLKNDDRYKELDSLITNGSEIGDNSGRSCIKRFFKIIGNEMKNN) the chain is Cytoplasmic. The chain crosses the membrane as a helical span at residues 57-77 (VYVYFLSILYLCVCVMNKVFA). The Vacuolar portion of the chain corresponds to 78–88 (KRTLNKMGNYS). Asparagine 86 carries an N-linked (GlcNAc...) asparagine glycan. A helical transmembrane segment spans residues 89–109 (FVTSETHNIICIVVFQLLYFI). Over 110 to 125 (YRKTSTSGYKNESQKN) the chain is Cytoplasmic. A helical membrane pass occupies residues 126–146 (FGWQFFLISLLDASTVIISMI). Residues 147–156 (GLTRTTGNIQ) are Vacuolar-facing. The helical transmembrane segment at 157 to 177 (SFIMQLIIPVNMYFCFMFLGY) threads the bilayer. Over 178 to 180 (RYH) the chain is Cytoplasmic. Residues 181–201 (LFNYLGAFIILITIAVVETFL) traverse the membrane as a helical segment. The Vacuolar portion of the chain corresponds to 202–209 (SFETQSEN). The helical transmembrane segment at 210 to 230 (SIIFNLIMISALIPLSFSNMT) threads the bilayer. Residues 231–248 (REVVFKKHKINILRLNAM) lie on the Cytoplasmic side of the membrane. Residues 249 to 269 (VVLFQFFTSLLVLPVYNIPFL) form a helical membrane-spanning segment. At 270-317 (KEIYMPFSEMSTNINNGLRCLFYGQNTVVENCGVGMVKMCDNCEGAWK) the chain is on the vacuolar side. Cystine bridges form between cysteine 289–cysteine 312 and cysteine 301–cysteine 309. Residues 318–338 (TFITFSFFNICDNLLACYIID) traverse the membrane as a helical segment. Over 339-346 (KFSTMTYT) the chain is Cytoplasmic. A helical membrane pass occupies residues 347–367 (IVSCIQGPAITIAYYFKFLAG). At 368–377 (DAVRKPRILD) the chain is on the vacuolar side. A helical membrane pass occupies residues 378-398 (FLTLFGYLFGTIIYRIGNIIL). The Cytoplasmic portion of the chain corresponds to 399 to 424 (EKKKMVKSQNSNDSEAELTCIETSTA).

This sequence belongs to the CRT-like transporter family.

It is found in the vacuole membrane. Its function is as follows. Nutrient transporter. Involved in maintaining the osmotic homeostasis of the digestive vacuole. This chain is Putative chloroquine resistance transporter, found in Plasmodium yoelii yoelii.